Consider the following 347-residue polypeptide: Secretory carrier-associated membrane protein 3 (347 aa).

The disordered stretch occupies residues 1 to 88; that stretch reads MAQSRDGGNP…EPKNYGSYST (88 aa). The Cytoplasmic portion of the chain corresponds to 1–170; sequence MAQSRDGGNP…QKTVSTMYYL (170 aa). Ser-32 carries the phosphoserine modification. The residue at position 37 (Thr-37) is a Phosphothreonine. Phosphotyrosine occurs at positions 41 and 53. The span at 49–66 shows a compositional bias: pro residues; the sequence is PPPAYEPPAPAPLPPPSA. 2 positions are modified to phosphoserine: Ser-72 and Ser-76. The residue at position 83 (Tyr-83) is a Phosphotyrosine. Ser-85 bears the Phosphoserine mark. The next 4 helical transmembrane spans lie at 171-191, 197-217, 247-267, and 277-297; these read WMCSTLALLLNFLACLASFCV, AGFGLSILWVLLFTPCSFVCW, FVLQAIGIPGWGFSGWISALV, and VLMLLVALLFTGIAVLGIVML. Topologically, residues 298 to 347 are cytoplasmic; sequence KRIHSLYRRTGASFQKAQQEFAAGVFSNPAVRTAAANAAAGAAENAFRAP. Lys-313 participates in a covalent cross-link: Glycyl lysine isopeptide (Lys-Gly) (interchain with G-Cter in SUMO1).

Belongs to the SCAMP family. Interacts with NEDD4, NEDD4L and TSG101. Interacts with RNF126. Post-translationally, monoubiquitinated. As to expression, widely expressed, with highest expression in heart and skeletal muscle.

Its subcellular location is the membrane. Functionally, functions in post-Golgi recycling pathways. Acts as a recycling carrier to the cell surface. In Homo sapiens (Human), this protein is Secretory carrier-associated membrane protein 3 (SCAMP3).